A 370-amino-acid polypeptide reads, in one-letter code: Histidinol-phosphate aminotransferase 2 (370 aa).

At Lys230 the chain carries N6-(pyridoxal phosphate)lysine.

The protein belongs to the class-II pyridoxal-phosphate-dependent aminotransferase family. Histidinol-phosphate aminotransferase subfamily. Homodimer. Pyridoxal 5'-phosphate is required as a cofactor.

The catalysed reaction is L-histidinol phosphate + 2-oxoglutarate = 3-(imidazol-4-yl)-2-oxopropyl phosphate + L-glutamate. Its pathway is amino-acid biosynthesis; L-histidine biosynthesis; L-histidine from 5-phospho-alpha-D-ribose 1-diphosphate: step 7/9. This is Histidinol-phosphate aminotransferase 2 from Pseudomonas fluorescens (strain ATCC BAA-477 / NRRL B-23932 / Pf-5).